Consider the following 3907-residue polypeptide: A-kinase anchor protein 9 (3907 aa).

Residues 1–14 (MEDEERQKKLEAGK) are compositionally biased toward basic and acidic residues. The interval 1–57 (MEDEERQKKLEAGKAKLAQFRQRKAQSDGQSPSKKQKKKRKTSSSKHDVSAHHDLNI) is disordered. Positions 34–44 (KKQKKKRKTSS) are enriched in basic residues. Residues 45–56 (SKHDVSAHHDLN) show a composition bias toward basic and acidic residues. Coiled coils occupy residues 152-902 (DSPT…ELHL), 932-1010 (EVVE…ENVQ), 1088-1173 (QPSE…QTMK), 1241-1268 (ELQD…EEYN), 1324-1380 (KLSS…ESTV), 1422-1447 (VKEE…VAKV), and 1573-1647 (SMDA…DNEN). At serine 153 the chain carries Phosphoserine. Position 1327 is a phosphoserine (serine 1327). Residues 1682–1692 (STQTQNGNENQ) are compositionally biased toward low complexity. Residues 1682–1713 (STQTQNGNENQGEVEEQTFKEKELDRKPEDVP) are disordered. The span at 1698-1711 (QTFKEKELDRKPED) shows a compositional bias: basic and acidic residues. Residue serine 1765 is modified to Phosphoserine. Coiled-coil stretches lie at residues 1845 to 2443 (NISS…VEKI), 2532 to 2549 (ETEM…IVEE), 2591 to 2764 (QLRE…SKKA), 3061 to 3088 (LNCL…ADRR), 3120 to 3466 (ELLE…NLNE), and 3583 to 3685 (SLTE…NDSL). The PKA-RII subunit binding domain stretch occupies residues 2542 to 2555 (NLQKIVEEKVAAAL). Residues 3377-3405 (RQQMEKDRQVHRKTLQTEQEANTEGQKKM) form a disordered region. Phosphoserine is present on residues serine 3690, serine 3842, serine 3865, and serine 3897.

Interacts with the regulatory region of protein kinase N (PKN), protein phosphatase 2A (PP2A), protein phosphatase 1 (PP1) and the immature non-phosphorylated form of PKC epsilon. Interacts with CIP4 and FNBP1. Interacts with chloride intracellular channel proteins CLIC1, CLIC4 and CLIC5. CSNK1D binding promotes its centrosomal subcellular location. Interacts with GM130/GOLGA2; leading to recruitment to the Golgi apparatus. Interacts with KCNQ1; targets protein kinase A (PKA) catalytic and regulatory subunits and protein phosphatase 1 (PP1), to the heterodimer KCNQ1-KCNE1. Interacts with PDE4DIP isoform 13/MMG8/SMYLE; this interaction stabilizes both proteins. In complex with PDE4DIP isoform 13, recruits CAMSAP2 to the Golgi apparatus. Forms a pericentrosomal complex with CDK5RAP2, EB1/MAPRE1 and PDE4DIP isoform 13; within this complex, MAPRE1 binding to CDK5RAP2 may be mediated by PDE4DIP. Interacts with MAPRE1 and MAPRE3. Interacts (via C-terminus) with CAMSAP2; this interaction is much stronger in the presence of PDE4DIP isoform 13/MMG8/SMYLE. Interacts with CAMSAP3. Interacts (via C-terminus) with the gamma-tubulin ring complex (gamma-TuRC), composed of gamma-tubulin, TUBGCP2, TUBGCP3, TUBGCP4, TUBGCP5 and TUBGCP6. Widely expressed. Isoform 4: Highly expressed in skeletal muscle and in pancreas.

Its subcellular location is the golgi apparatus. The protein resides in the cytoplasm. It localises to the cytoskeleton. It is found in the microtubule organizing center. The protein localises to the centrosome. Scaffolding protein that assembles several protein kinases and phosphatases on the centrosome and Golgi apparatus. Required to maintain the integrity of the Golgi apparatus. Required for microtubule nucleation at the cis-side of the Golgi apparatus. Required for association of the centrosomes with the poles of the bipolar mitotic spindle during metaphase. In complex with PDE4DIP isoform 13/MMG8/SMYLE, recruits CAMSAP2 to the Golgi apparatus and tethers non-centrosomal minus-end microtubules to the Golgi, an important step for polarized cell movement. In complex with PDE4DIP isoform 13/MMG8/SMYLE, EB1/MAPRE1 and CDK5RAP2, contributes to microtubules nucleation and extension also from the centrosome to the cell periphery. Functionally, associated with the N-methyl-D-aspartate receptor and is specifically found in the neuromuscular junction (NMJ) as well as in neuronal synapses, suggesting a role in the organization of postsynaptic specializations. In Homo sapiens (Human), this protein is A-kinase anchor protein 9 (AKAP9).